Consider the following 351-residue polypeptide: sn-1 oleoyl-lipid 12-desaturase (351 aa).

Helical transmembrane passes span 46 to 66 (WASV…IIYL) and 68 to 88 (WYCL…AFVV). The Histidine box-1 signature appears at 90–94 (HDCGH). Residues 102–122 (WVNDLVGHIAFAPLIYPFHSW) traverse the membrane as a helical segment. The Histidine box-2 motif lies at 126-130 (HDHHH). A run of 2 helical transmembrane segments spans residues 199 to 219 (IAVV…TTGV) and 222 to 242 (FVKF…TFTI). Residues 290–294 (HHLSV) carry the Histidine box-3 motif.

Belongs to the fatty acid desaturase type 2 family. Requires Fe(2+) as cofactor.

Its subcellular location is the membrane. It carries out the reaction a 1-[(9Z)-octadecenoyl]-2-acyl-glycerolipid + 2 reduced [2Fe-2S]-[ferredoxin] + O2 + 2 H(+) = a 1-[(9Z,12Z)-octadecdienoyl]-2-acyl-glycerolipid + 2 oxidized [2Fe-2S]-[ferredoxin] + 2 H2O. The protein operates within lipid metabolism; polyunsaturated fatty acid biosynthesis. Its function is as follows. Desaturase involved in fatty acid biosynthesis. Introduces a double bond at carbon 12 of oleoyl groups (18:1) attached to the sn-1 position of the glycerol moiety of membrane glycerolipids. This enzyme is involved in chilling tolerance because the phase transition temperature of lipids of cellular membranes depends on the degree of unsaturation of fatty acids of the membrane lipids. This is sn-1 oleoyl-lipid 12-desaturase from Synechocystis sp. (strain ATCC 27184 / PCC 6803 / Kazusa).